The primary structure comprises 341 residues: Glycerol-3-phosphate dehydrogenase [NAD(P)+] (341 aa).

Residues serine 15, tryptophan 16, arginine 36, and lysine 110 each coordinate NADPH. Sn-glycerol 3-phosphate-binding residues include lysine 110, glycine 139, and serine 141. Position 143 (alanine 143) interacts with NADPH. Residues lysine 194, aspartate 247, serine 257, arginine 258, and asparagine 259 each coordinate sn-glycerol 3-phosphate. Lysine 194 (proton acceptor) is an active-site residue. Arginine 258 lines the NADPH pocket. NADPH contacts are provided by valine 282 and glutamate 284.

This sequence belongs to the NAD-dependent glycerol-3-phosphate dehydrogenase family.

The protein resides in the cytoplasm. It catalyses the reaction sn-glycerol 3-phosphate + NAD(+) = dihydroxyacetone phosphate + NADH + H(+). The catalysed reaction is sn-glycerol 3-phosphate + NADP(+) = dihydroxyacetone phosphate + NADPH + H(+). Its pathway is membrane lipid metabolism; glycerophospholipid metabolism. Its function is as follows. Catalyzes the reduction of the glycolytic intermediate dihydroxyacetone phosphate (DHAP) to sn-glycerol 3-phosphate (G3P), the key precursor for phospholipid synthesis. This chain is Glycerol-3-phosphate dehydrogenase [NAD(P)+], found in Stenotrophomonas maltophilia (strain R551-3).